A 271-amino-acid chain; its full sequence is Sec-independent protein translocase protein TatC (271 aa).

The next 5 membrane-spanning stretches (helical) occupy residues 24–44 (ISVGAIIVGFILCYSFSEQIF), 78–98 (FFAGLFLAMPVLFTQMWLFIA), 112–132 (FLFVTPVLFFMGGTLAYYFVF), 159–179 (LVIKLIIAFGITFELPVGLLL), and 215–235 (FTQVMLAIPIMLMYEISIFFG). The tract at residues 247 to 271 (AAEEAQWAADHNVDDDDVDHPEHKA) is disordered.

Belongs to the TatC family. In terms of assembly, the Tat system comprises two distinct complexes: a TatABC complex, containing multiple copies of TatA, TatB and TatC subunits, and a separate TatA complex, containing only TatA subunits. Substrates initially bind to the TatABC complex, which probably triggers association of the separate TatA complex to form the active translocon.

It localises to the cell inner membrane. Functionally, part of the twin-arginine translocation (Tat) system that transports large folded proteins containing a characteristic twin-arginine motif in their signal peptide across membranes. Together with TatB, TatC is part of a receptor directly interacting with Tat signal peptides. This is Sec-independent protein translocase protein TatC from Magnetococcus marinus (strain ATCC BAA-1437 / JCM 17883 / MC-1).